The primary structure comprises 312 residues: Glyceraldehyde-3-phosphate dehydrogenase, cytosolic (312 aa).

NAD(+)-binding positions include 5–6 and D27; that span reads RI. Residues 144–146, T175, 204–205, and R227 contribute to the D-glyceraldehyde 3-phosphate site; these read SCT and TG. C145 serves as the catalytic Nucleophile. Position 309 (N309) interacts with NAD(+).

The protein belongs to the glyceraldehyde-3-phosphate dehydrogenase family. As to quaternary structure, homotetramer.

It is found in the cytoplasm. The catalysed reaction is D-glyceraldehyde 3-phosphate + phosphate + NAD(+) = (2R)-3-phospho-glyceroyl phosphate + NADH + H(+). The protein operates within carbohydrate degradation; glycolysis; pyruvate from D-glyceraldehyde 3-phosphate: step 1/5. Key enzyme in glycolysis that catalyzes the first step of the pathway by converting D-glyceraldehyde 3-phosphate (G3P) into 3-phospho-D-glyceroyl phosphate. Essential for the maintenance of cellular ATP levels and carbohydrate metabolism. The chain is Glyceraldehyde-3-phosphate dehydrogenase, cytosolic (GapC) from Scenedesmus vacuolatus (Green alga).